The sequence spans 235 residues: Small ribosomal subunit protein uS3 (235 aa).

The region spanning 39–107 (VRKFLLGQLS…PTKLNISEIR (69 aa)) is the KH type-2 domain.

The protein belongs to the universal ribosomal protein uS3 family. Part of the 30S ribosomal subunit. Forms a tight complex with proteins S10 and S14.

Functionally, binds the lower part of the 30S subunit head. Binds mRNA in the 70S ribosome, positioning it for translation. The polypeptide is Small ribosomal subunit protein uS3 (Blochmanniella floridana).